Consider the following 519-residue polypeptide: Ion-translocating oxidoreductase complex subunit C (519 aa).

4Fe-4S ferredoxin-type domains follow at residues 372–401 (ETPEAKTMPCIRCGRCVQGCPVGLTPFELN) and 411–440 (GAAKVGLMDCLACGCCSYNCPANLPLVQSF). The [4Fe-4S] cluster site is built by Cys-381, Cys-384, Cys-387, Cys-391, Cys-420, Cys-423, Cys-426, and Cys-430. The tract at residues 494–519 (KAEEAAAAAAMPPPATATAIQGEATP) is disordered.

The protein belongs to the 4Fe4S bacterial-type ferredoxin family. RnfC subfamily. The complex is composed of six subunits: RnfA, RnfB, RnfC, RnfD, RnfE and RnfG. It depends on [4Fe-4S] cluster as a cofactor.

Its subcellular location is the cellular chromatophore membrane. In terms of biological role, part of a membrane-bound complex that couples electron transfer with translocation of ions across the membrane. Required for nitrogen fixation. Involved in electron transfer to nitrogenase. In Rhodobacter capsulatus (Rhodopseudomonas capsulata), this protein is Ion-translocating oxidoreductase complex subunit C.